A 227-amino-acid polypeptide reads, in one-letter code: PKHD-type hydroxylase Bcen_3557 (227 aa).

Residues 78-178 (KVFPPLFNRY…RVASFFWIQS (101 aa)) enclose the Fe2OG dioxygenase domain. Fe cation-binding residues include histidine 96, aspartate 98, and histidine 159. Residue arginine 169 coordinates 2-oxoglutarate.

Fe(2+) serves as cofactor. The cofactor is L-ascorbate.

In Burkholderia orbicola (strain AU 1054), this protein is PKHD-type hydroxylase Bcen_3557.